The primary structure comprises 273 residues: Cytosolic sulfotransferase 4 (273 aa).

Position 74–79 (74–79) interacts with 3'-phosphoadenylyl sulfate; that stretch reads KCGTTW. His121 functions as the Proton acceptor in the catalytic mechanism. 3'-phosphoadenylyl sulfate-binding positions include Arg143 and 239–241; that span reads RKG.

Belongs to the sulfotransferase 1 family.

The protein localises to the cytoplasm. Its function is as follows. Sulfotransferase that utilizes 3'-phospho-5'-adenylyl sulfate (PAPS) as sulfonate donor. The chain is Cytosolic sulfotransferase 4 (SOT4) from Arabidopsis thaliana (Mouse-ear cress).